The following is a 521-amino-acid chain: Ankyrin repeat and death domain-containing protein 1B (521 aa).

ANK repeat units lie at residues 60 to 89, 93 to 122, 126 to 155, 159 to 190, 194 to 223, 227 to 256, 260 to 289, 293 to 322, 326 to 355, and 359 to 388; these read AIER…NINA, MNRT…RVDV, HGLT…DQRA, EGMN…DLNQ, RGRK…HTSE, DGNT…EVNE, LNVS…DLQQ, SKEP…DVDV, RRQT…NLKI, and QGKT…YYAW. The Death domain occupies 420–508; it reads TLLWNLAYRQ…ELAEKIRQFK (89 aa).

This is Ankyrin repeat and death domain-containing protein 1B (Ankdd1b) from Mus musculus (Mouse).